A 438-amino-acid chain; its full sequence is 3-phosphoshikimate 1-carboxyvinyltransferase (438 aa).

Residue Lys21 coordinates phosphoenolpyruvate. 3-phosphoshikimate contacts are provided by Ser22 and Arg26. Residues 93-96 are phosphoenolpyruvate; sequence NSGT. 3 residues coordinate phosphoenolpyruvate: Gly95, Thr96, and Arg123. Positions 167, 168, 169, 315, and 342 each coordinate 3-phosphoshikimate. Gln169 contacts phosphoenolpyruvate. The Proton acceptor role is filled by Asp315. Residues Arg346 and Arg387 each coordinate phosphoenolpyruvate.

Belongs to the EPSP synthase family. Homodimer or homotetramer.

It localises to the cytoplasm. The enzyme catalyses 3-phosphoshikimate + phosphoenolpyruvate = 5-O-(1-carboxyvinyl)-3-phosphoshikimate + phosphate. It participates in metabolic intermediate biosynthesis; chorismate biosynthesis; chorismate from D-erythrose 4-phosphate and phosphoenolpyruvate: step 6/7. Its function is as follows. Catalyzes the transfer of the enolpyruvyl moiety of phosphoenolpyruvate (PEP) to the 5-hydroxyl of shikimate-3-phosphate (S3P) to produce enolpyruvyl shikimate-3-phosphate and inorganic phosphate. The sequence is that of 3-phosphoshikimate 1-carboxyvinyltransferase from Coxiella burnetii (strain RSA 493 / Nine Mile phase I).